The chain runs to 490 residues: Betaine aldehyde dehydrogenase (490 aa).

Residue Asp93 coordinates K(+). 150–152 (GAW) contributes to the NAD(+) binding site. Residue Lys162 is the Charge relay system of the active site. An NAD(+)-binding site is contributed by 176-179 (KPSE). Residue Val180 coordinates K(+). NAD(+) is bound at residue 230–233 (GIAS). Leu246 provides a ligand contact to K(+). Glu252 serves as the catalytic Proton acceptor. NAD(+)-binding residues include Gly254, Cys286, and Glu387. The active-site Nucleophile is Cys286. A Cysteine sulfenic acid (-SOH) modification is found at Cys286. K(+)-binding residues include Lys457 and Gly460. Glu464 acts as the Charge relay system in catalysis.

It belongs to the aldehyde dehydrogenase family. Dimer of dimers. It depends on K(+) as a cofactor.

It catalyses the reaction betaine aldehyde + NAD(+) + H2O = glycine betaine + NADH + 2 H(+). The protein operates within amine and polyamine biosynthesis; betaine biosynthesis via choline pathway; betaine from betaine aldehyde: step 1/1. Involved in the biosynthesis of the osmoprotectant glycine betaine. Catalyzes the irreversible oxidation of betaine aldehyde to the corresponding acid. The sequence is that of Betaine aldehyde dehydrogenase from Yersinia pseudotuberculosis serotype IB (strain PB1/+).